The chain runs to 1935 residues: Rho GTPase-activating protein 21 (1935 aa).

The segment at 1 to 46 is disordered; the sequence is MATRRATVPEQQQQQPSSPGSEISKNKDGQEQSEMVSPTEEEGFCW. Residues 78-163 form the PDZ domain; it reads HTTVKDEENG…TLELSVMPKD (86 aa). Disordered stretches follow at residues 212–237, 339–373, 413–456, 673–718, and 862–919; these read VEVP…TTQP, PPSY…PGSH, QNTT…QERL, TSTS…DSNS, and NSKT…DVFS. Polar residues-rich tracts occupy residues 217–237, 348–373, and 413–429; these read SGTS…TTQP, SMFS…PGSH, and QNTT…SSGQ. 2 stretches are compositionally biased toward low complexity: residues 441–451 and 673–685; these read PQSVQMRQRSV and TSTS…PAHT. Over residues 708–718 the composition is skewed to polar residues; it reads SPEANAGDSNS. Positions 863-884 are enriched in basic and acidic residues; sequence SKTERSKSCDEGLDDYKDEGKL. The 114-residue stretch at 920 to 1033 folds into the PH domain; it reads DSNKEGFLYF…WIKAIQENGN (114 aa). Positions 1056-1126 are disordered; sequence TMMSSSSNKS…KGSWRRIMKK (71 aa). Over residues 1059-1072 the composition is skewed to low complexity; it reads SSSSNKSEQSPKPS. Basic and acidic residues predominate over residues 1097 to 1119; it reads PKQESERRLFSKDDISPPKDKGS. The Rho-GAP domain maps to 1140–1332; sequence VRLDDCPPAH…TLIQQHDWFF (193 aa). Disordered regions lie at residues 1341 to 1393, 1411 to 1431, 1488 to 1510, 1525 to 1548, 1637 to 1665, 1688 to 1733, and 1838 to 1925; these read ITAV…GSGK, RKRK…ELDN, SEAT…RLPP, SMSD…KPKV, HRSK…SITP, SIRQ…EPEE, and SELS…SGTQ. Residues 1345–1355 show a composition bias toward polar residues; sequence QEESTVESQPV. Positions 1376 to 1393 are enriched in low complexity; sequence SDSASDSAKSKGSWGSGK. 2 stretches are compositionally biased toward polar residues: residues 1525-1543 and 1646-1662; these read SMSD…SAQR and RNVQ…TEGS. Over residues 1691-1705 the composition is skewed to basic and acidic residues; the sequence is QKTDSECSAESKNEE. Composition is skewed to polar residues over residues 1872-1889 and 1898-1911; these read QVST…SQGT and NGDS…NNFS.

It is found in the golgi apparatus membrane. It localises to the cell junction. Its subcellular location is the cytoplasmic vesicle membrane. The protein resides in the cytoplasm. The protein localises to the cytoskeleton. In terms of biological role, GTPase-activating protein (GAP) for rhoa and cdc42. This chain is Rho GTPase-activating protein 21 (arhgap21), found in Xenopus tropicalis (Western clawed frog).